The following is a 481-amino-acid chain: Glutamyl-tRNA(Gln) amidotransferase subunit A (481 aa).

Residues lysine 74 and serine 149 each act as charge relay system in the active site. Serine 173 functions as the Acyl-ester intermediate in the catalytic mechanism.

It belongs to the amidase family. GatA subfamily. In terms of assembly, heterotrimer of A, B and C subunits.

The enzyme catalyses L-glutamyl-tRNA(Gln) + L-glutamine + ATP + H2O = L-glutaminyl-tRNA(Gln) + L-glutamate + ADP + phosphate + H(+). Its function is as follows. Allows the formation of correctly charged Gln-tRNA(Gln) through the transamidation of misacylated Glu-tRNA(Gln) in organisms which lack glutaminyl-tRNA synthetase. The reaction takes place in the presence of glutamine and ATP through an activated gamma-phospho-Glu-tRNA(Gln). This chain is Glutamyl-tRNA(Gln) amidotransferase subunit A, found in Francisella tularensis subsp. tularensis (strain FSC 198).